Reading from the N-terminus, the 400-residue chain is MTTLGTPLSPSATRVLLLGSGELGKEVAIELQRFGVEVIAADRYANAPAMQVAHRSHVLDMLDPIALRTLIANERPHLIVPEIEAIHTEALVALEREQGQKVIPTARAARLTMDREGIRRLAAETLGLPTSPYRFVDTVEEYRDAIAAVGLPCVVKPVMSSSGKGQSTLRSEADIDAAWEYAQTGGRAGAGRCIVEGFIDFDYEITLLTVRHAGGTSYCDPIGHWQQDGDYRESWQPQPMSAAALRRSQQIAKAITDDLGGRGLFGVELFVKGDEVWFSEVSPRPHDTGLVTLVSQELSEFALHARAILGLPVGAQDGGVIRQAGPSASCALLAHGNGVPAFDNVAEALRDPDTALRLFGKPRVDGHRRVGVTLARADSVDAAREKARVAAAALTIQLQA.

N(1)-(5-phospho-beta-D-ribosyl)glycinamide is bound by residues 22 to 23 and glutamate 82; that span reads EL. Residues arginine 115, lysine 156, 161–166, 196–199, and glutamate 204 each bind ATP; these read SSGKGQ and EGFI. The ATP-grasp domain maps to 120 to 309; the sequence is RLAAETLGLP…EFALHARAIL (190 aa). 2 residues coordinate Mg(2+): glutamate 268 and glutamate 280. N(1)-(5-phospho-beta-D-ribosyl)glycinamide contacts are provided by residues aspartate 287, lysine 361, and 368-369; that span reads RR.

It belongs to the PurK/PurT family. Homodimer.

It catalyses the reaction N(1)-(5-phospho-beta-D-ribosyl)glycinamide + formate + ATP = N(2)-formyl-N(1)-(5-phospho-beta-D-ribosyl)glycinamide + ADP + phosphate + H(+). Its pathway is purine metabolism; IMP biosynthesis via de novo pathway; N(2)-formyl-N(1)-(5-phospho-D-ribosyl)glycinamide from N(1)-(5-phospho-D-ribosyl)glycinamide (formate route): step 1/1. Its function is as follows. Involved in the de novo purine biosynthesis. Catalyzes the transfer of formate to 5-phospho-ribosyl-glycinamide (GAR), producing 5-phospho-ribosyl-N-formylglycinamide (FGAR). Formate is provided by PurU via hydrolysis of 10-formyl-tetrahydrofolate. This Xanthomonas axonopodis pv. citri (strain 306) protein is Formate-dependent phosphoribosylglycinamide formyltransferase.